We begin with the raw amino-acid sequence, 369 residues long: Muscleblind-like protein 1 (369 aa).

4 consecutive C3H1-type zinc fingers follow at residues 13–41 (WLTL…HPSK), 47–73 (NGRV…HPPP), 178–206 (TDRL…HPAD), and 214–240 (DNTV…HPPA).

The protein belongs to the muscleblind family.

It localises to the nucleus. The protein resides in the cytoplasm. The protein localises to the cytoplasmic granule. Its function is as follows. Involved in pre-mRNA alternative splicing regulation. Binds to CUG triplet repeat in RNA. The polypeptide is Muscleblind-like protein 1 (MBNL1) (Gallus gallus (Chicken)).